A 452-amino-acid polypeptide reads, in one-letter code: Exodeoxyribonuclease 7 large subunit (452 aa).

This sequence belongs to the XseA family. Heterooligomer composed of large and small subunits.

Its subcellular location is the cytoplasm. The enzyme catalyses Exonucleolytic cleavage in either 5'- to 3'- or 3'- to 5'-direction to yield nucleoside 5'-phosphates.. Functionally, bidirectionally degrades single-stranded DNA into large acid-insoluble oligonucleotides, which are then degraded further into small acid-soluble oligonucleotides. The chain is Exodeoxyribonuclease 7 large subunit from Lysinibacillus sphaericus (strain C3-41).